A 204-amino-acid chain; its full sequence is Synaptosomal-associated protein 25-A (204 aa).

Positions 1 to 11 are enriched in basic and acidic residues; that stretch reads MAEDADMRNEL. The tract at residues 1-25 is disordered; sequence MAEDADMRNELSDMQQRADQLADES. T-SNARE coiled-coil homology domains follow at residues 19–81 and 138–200; these read DQLA…LNDL and DARE…ATKM.

Belongs to the SNAP-25 family.

It localises to the synapse. Its subcellular location is the synaptosome. The protein localises to the cell membrane. In terms of biological role, may play an important role in the synaptic function of specific neuronal systems. Associates with proteins involved in vesicle docking and membrane fusion. The polypeptide is Synaptosomal-associated protein 25-A (snap25a) (Carassius auratus (Goldfish)).